We begin with the raw amino-acid sequence, 223 residues long: MIVTQDKALANVFRQMATGAFPPVVETFERNKTIFFPGDPAERVYFLLKGAVKLSRVYEAGEEITVALLRENSVFGVLSLLTGNKSDRFYHAVAFTPVELLSAPIEQVEQALKENPELSMLMLRGLSSRILQTEMMIETLAHRDMGSRLVSFLLILCRDFGVPCADGITIDLKLSHQAIAEAIGSTRVTVTRLLGDLREKKMISIHKKKITVHKPVTLSRQFT.

The region spanning 143–216 is the HTH crp-type domain; sequence RDMGSRLVSF…KKKITVHKPV (74 aa). The segment at residues 176-195 is a DNA-binding region (H-T-H motif); it reads HQAIAEAIGSTRVTVTRLLG.

Its function is as follows. Required for full expression of proteins subject to ammonium repression. Transcriptional activator of genes subject to nitrogen control. Has affinity for the xisA upstream region. Binds to a 66 bp region containing three repeats of the consensus recognition sequence 5'-ACATT-3'. This chain is Global nitrogen regulator (ntcA), found in Nostoc sp. (strain PCC 7120 / SAG 25.82 / UTEX 2576).